We begin with the raw amino-acid sequence, 380 residues long: Cytochrome b (380 aa).

The next 4 helical transmembrane spans lie at 34–54, 78–99, 114–134, and 179–199; these read FGSLLGLCLVTQILTGLLLAT, WLIRNLHANGASFFFICIYLHI, WNTGILLLLTLMATAFVGYVL, and FFALHFLLPFMIAGLTLIHLT. 2 residues coordinate heme b: His84 and His98. 2 residues coordinate heme b: His183 and His197. His202 serves as a coordination point for a ubiquinone. 4 consecutive transmembrane segments (helical) span residues 227-247, 289-309, 321-341, and 348-368; these read LKDTLGFMFMLFLLTTLALFS, LGGVLALAASVLILFLSPLLH, FSQFLFWLLIANLLILTWVGS, and FIIIGQLASLTYFTILLILLP.

This sequence belongs to the cytochrome b family. As to quaternary structure, the cytochrome bc1 complex contains 11 subunits: 3 respiratory subunits (MT-CYB, CYC1 and UQCRFS1), 2 core proteins (UQCRC1 and UQCRC2) and 6 low-molecular weight proteins (UQCRH/QCR6, UQCRB/QCR7, UQCRQ/QCR8, UQCR10/QCR9, UQCR11/QCR10 and a cleavage product of UQCRFS1). This cytochrome bc1 complex then forms a dimer. Requires heme b as cofactor.

The protein resides in the mitochondrion inner membrane. In terms of biological role, component of the ubiquinol-cytochrome c reductase complex (complex III or cytochrome b-c1 complex) that is part of the mitochondrial respiratory chain. The b-c1 complex mediates electron transfer from ubiquinol to cytochrome c. Contributes to the generation of a proton gradient across the mitochondrial membrane that is then used for ATP synthesis. This Garrodia nereis (Grey-backed storm-petrel) protein is Cytochrome b (MT-CYB).